Here is a 111-residue protein sequence, read N- to C-terminus: NADH-ubiquinone oxidoreductase chain 3 (111 aa).

3 consecutive transmembrane segments (helical) span residues 1-21 (MLVL…FYIG), 56-76 (FFIM…FLGI), and 84-104 (LISF…EWWY).

It belongs to the complex I subunit 3 family.

Its subcellular location is the mitochondrion membrane. It catalyses the reaction a ubiquinone + NADH + 5 H(+)(in) = a ubiquinol + NAD(+) + 4 H(+)(out). Its function is as follows. Core subunit of the mitochondrial membrane respiratory chain NADH dehydrogenase (Complex I) that is believed to belong to the minimal assembly required for catalysis. Complex I functions in the transfer of electrons from NADH to the respiratory chain. The immediate electron acceptor for the enzyme is believed to be ubiquinone. This chain is NADH-ubiquinone oxidoreductase chain 3 (ND3), found in Ascaris suum (Pig roundworm).